The primary structure comprises 152 residues: Aspartate 1-decarboxylase (152 aa).

Ser-24 serves as the catalytic Schiff-base intermediate with substrate; via pyruvic acid. A Pyruvic acid (Ser) modification is found at Ser-24. Thr-56 serves as a coordination point for substrate. The Proton donor role is filled by Tyr-57. Residue 72-74 (GAA) participates in substrate binding.

This sequence belongs to the PanD family. Heterooctamer of four alpha and four beta subunits. It depends on pyruvate as a cofactor. In terms of processing, is synthesized initially as an inactive proenzyme, which is activated by self-cleavage at a specific serine bond to produce a beta-subunit with a hydroxyl group at its C-terminus and an alpha-subunit with a pyruvoyl group at its N-terminus.

The protein localises to the cytoplasm. The catalysed reaction is L-aspartate + H(+) = beta-alanine + CO2. Its pathway is cofactor biosynthesis; (R)-pantothenate biosynthesis; beta-alanine from L-aspartate: step 1/1. Catalyzes the pyruvoyl-dependent decarboxylation of aspartate to produce beta-alanine. The polypeptide is Aspartate 1-decarboxylase (Rhodospirillum centenum (strain ATCC 51521 / SW)).